The sequence spans 36 residues: DNA binding protein ORF8 (36 aa).

The protein belongs to the microviridae J protein family.

The protein resides in the virion. It is found in the host cytoplasm. Functionally, mediates ssDNA packaging into virion, it locates to the internal surface of the capsid. Additionally, plays a role in viral attachment to the host cell. The chain is DNA binding protein ORF8 from Chlamydia phage 1 (Bacteriophage Chp1).